Consider the following 344-residue polypeptide: Holliday junction branch migration complex subunit RuvB (344 aa).

Residues 1-181 (MERIVTPAEM…FGVLCAMEYY (181 aa)) are large ATPase domain (RuvB-L). Residues Leu-20, Arg-21, Gly-62, Lys-65, Thr-66, Thr-67, 128-130 (EDY), Arg-171, Tyr-181, and Arg-218 contribute to the ATP site. Thr-66 is a Mg(2+) binding site. Residues 182 to 252 (DETQLKEIVI…EARDALELLE (71 aa)) form a small ATPAse domain (RuvB-S) region. The head domain (RuvB-H) stretch occupies residues 255–344 (NQGFDKVDNK…SNKGQTSFFK (90 aa)). Positions 310 and 315 each coordinate DNA.

Belongs to the RuvB family. In terms of assembly, homohexamer. Forms an RuvA(8)-RuvB(12)-Holliday junction (HJ) complex. HJ DNA is sandwiched between 2 RuvA tetramers; dsDNA enters through RuvA and exits via RuvB. An RuvB hexamer assembles on each DNA strand where it exits the tetramer. Each RuvB hexamer is contacted by two RuvA subunits (via domain III) on 2 adjacent RuvB subunits; this complex drives branch migration. In the full resolvosome a probable DNA-RuvA(4)-RuvB(12)-RuvC(2) complex forms which resolves the HJ.

Its subcellular location is the cytoplasm. The enzyme catalyses ATP + H2O = ADP + phosphate + H(+). Functionally, the RuvA-RuvB-RuvC complex processes Holliday junction (HJ) DNA during genetic recombination and DNA repair, while the RuvA-RuvB complex plays an important role in the rescue of blocked DNA replication forks via replication fork reversal (RFR). RuvA specifically binds to HJ cruciform DNA, conferring on it an open structure. The RuvB hexamer acts as an ATP-dependent pump, pulling dsDNA into and through the RuvAB complex. RuvB forms 2 homohexamers on either side of HJ DNA bound by 1 or 2 RuvA tetramers; 4 subunits per hexamer contact DNA at a time. Coordinated motions by a converter formed by DNA-disengaged RuvB subunits stimulates ATP hydrolysis and nucleotide exchange. Immobilization of the converter enables RuvB to convert the ATP-contained energy into a lever motion, pulling 2 nucleotides of DNA out of the RuvA tetramer per ATP hydrolyzed, thus driving DNA branch migration. The RuvB motors rotate together with the DNA substrate, which together with the progressing nucleotide cycle form the mechanistic basis for DNA recombination by continuous HJ branch migration. Branch migration allows RuvC to scan DNA until it finds its consensus sequence, where it cleaves and resolves cruciform DNA. This is Holliday junction branch migration complex subunit RuvB from Clostridium botulinum (strain Eklund 17B / Type B).